A 98-amino-acid polypeptide reads, in one-letter code: MNEEERVGSSSSSSSSLPVSYGVDCEKYDFSSSVSSLSQPFSPEGSSNKSHVLENNLSFVFSLDHNSNSSLMFPRDRPCSCLHHVFEWILQRCCGCLC.

In terms of tissue distribution, mainly expressed in flowers, to a lower extent, in roots and, at very low levels, in leaves and stems.

The protein localises to the cytoplasm. Its function is as follows. Acts as an opponent to RZF1 during early seedling growth in term of proline accumulation in response to dehydration and abscisic acid (ABA). Confers sensitivity to abiotic stresses such as ABA, drought and osmotic stress (e.g. mannitol treatment) by preventing proline accumulation and by reducing the expression of dehydration-inducible genes. Promotes the production of lipid peroxidation by drought stress thus leading to malondialdehyde (MDA) synthesis. Prevents pollen tube elongation. Necessary for RZF1 expression in seedlings. This is Protein PROLINE CONTENT ALTERNATIVE 22 from Arabidopsis thaliana (Mouse-ear cress).